A 695-amino-acid chain; its full sequence is MAFETFSVALDKDKTLIFETGKIARQASGAVLVKMNETWVFSSACAASLSEAVDFLPFRVDYQEKFSSAGRTSGGFLKREGRPSEREILVSRLMDRSLRPSFPNRLMQDIQVLSYVWSYDGKTLPDPLAICGASAALAISEVPQNCIVAGVRVGLVGGKWVINPTRDELSASKLDLVMAGTASAVLMIEGHCDFLTEEQVLEAIAFGQTYIAKICDAIEAWQKAIGKQKNFSAVLDMPEDVQNVVSDFIREKFEKALSFRDKEALEQASKELEESVIANLVQEENSDFSLLNVKAAFKTAKSNQMRALIQDLGIRVDGRTTTEIRPISIETPFLPRTHGSCLFTRGETQSMAVCTLGGENMAQRFEDLNGDGAARFYLQYFFPPFSVGEVGRIGSPGRREIGHGKLAEKALSHVLPETSRFPYIIRLESNITESNGSSSMASVCGGCLALMDAGVPIKAPVAGIAMGLILDRDQAIILSDISGIEDHLGDMDFKVAGTAKGITAFQMDIKIEGITHKIMEQALAQAKQGRSHILNLMTQVLASPKGTVSKYAPRIETMQINTSKIATVIGPGGKQIRQIIERSGAQVDINDDGVINIAASTQESINKAKELIEGLTGEVEVGKVYNGRVTSIATFGVFVEVLPGKEGLCHISELSKQKVDNISDFVKEGDKLAVKLLSINEKGQLKLSHKATLED.

Mg(2+) is bound by residues Asp486 and Asp492. Residues 553–612 (PRIETMQINTSKIATVIGPGGKQIRQIIERSGAQVDINDDGVINIAASTQESINKAKELI) enclose the KH domain. An S1 motif domain is found at 622–690 (GKVYNGRVTS…EKGQLKLSHK (69 aa)).

The protein belongs to the polyribonucleotide nucleotidyltransferase family. Mg(2+) is required as a cofactor.

The protein localises to the cytoplasm. It carries out the reaction RNA(n+1) + phosphate = RNA(n) + a ribonucleoside 5'-diphosphate. Involved in mRNA degradation. Catalyzes the phosphorolysis of single-stranded polyribonucleotides processively in the 3'- to 5'-direction. The chain is Polyribonucleotide nucleotidyltransferase from Chlamydia trachomatis serovar D (strain ATCC VR-885 / DSM 19411 / UW-3/Cx).